Consider the following 105-residue polypeptide: Large ribosomal subunit protein uL24 (105 aa).

It belongs to the universal ribosomal protein uL24 family. In terms of assembly, part of the 50S ribosomal subunit.

Its function is as follows. One of two assembly initiator proteins, it binds directly to the 5'-end of the 23S rRNA, where it nucleates assembly of the 50S subunit. In terms of biological role, one of the proteins that surrounds the polypeptide exit tunnel on the outside of the subunit. The protein is Large ribosomal subunit protein uL24 of Dictyoglomus turgidum (strain DSM 6724 / Z-1310).